The primary structure comprises 651 residues: Methionine--tRNA ligase (651 aa).

Positions 10 to 20 (AYTNGPLHLGH) match the 'HIGH' region motif. The Zn(2+) site is built by C142, C145, C154, and C157. Positions 320–324 (KMSTS) match the 'KMSKS' region motif. T323 contributes to the ATP binding site. The region spanning 550–651 (YLEKIDLRVG…KDIKAGSKVR (102 aa)) is the tRNA-binding domain.

This sequence belongs to the class-I aminoacyl-tRNA synthetase family. MetG type 1 subfamily. Homodimer. It depends on Zn(2+) as a cofactor.

It localises to the cytoplasm. The enzyme catalyses tRNA(Met) + L-methionine + ATP = L-methionyl-tRNA(Met) + AMP + diphosphate. Functionally, is required not only for elongation of protein synthesis but also for the initiation of all mRNA translation through initiator tRNA(fMet) aminoacylation. This Methanocaldococcus jannaschii (strain ATCC 43067 / DSM 2661 / JAL-1 / JCM 10045 / NBRC 100440) (Methanococcus jannaschii) protein is Methionine--tRNA ligase.